We begin with the raw amino-acid sequence, 434 residues long: uncharacterized protein (434 aa).

5 consecutive transmembrane segments (helical) span residues 27–47, 64–84, 244–264, 289–309, and 387–407; these read IFLLFVILVFVPIGFVFQSVI, FYLSSIKSISLLFLLLLFVNW, IILAFYVTQKILIMIILATVL, VPVNVFAMTIAIAIRFVPSLL, and LILTALYFVVIIFLTVKGAVF.

The protein belongs to the CbiQ family.

It localises to the cell membrane. This is an uncharacterized protein from Mycoplasma pneumoniae (strain ATCC 29342 / M129 / Subtype 1) (Mycoplasmoides pneumoniae).